Here is a 301-residue protein sequence, read N- to C-terminus: Homeobox protein Nkx-2.6 (301 aa).

A disordered region spans residues 22–135 (ERSCPAASPH…QPKARQRRKP (114 aa)). Residues 132 to 191 (RRKPRVLFSQAQVLALERRFKQQRYLSAPEREHLASALQLTSTQVKIWFQNRRYKCKRQR) constitute a DNA-binding region (homeobox).

The protein belongs to the NK-2 homeobox family.

The protein localises to the nucleus. In terms of biological role, acts as a transcriptional activator. In conjunction with NKX2-5, may play a role in both pharyngeal and cardiac embryonic development. The polypeptide is Homeobox protein Nkx-2.6 (NKX2-6) (Homo sapiens (Human)).